Reading from the N-terminus, the 354-residue chain is S-adenosylmethionine:tRNA ribosyltransferase-isomerase (354 aa).

Belongs to the QueA family. In terms of assembly, monomer.

The protein resides in the cytoplasm. The catalysed reaction is 7-aminomethyl-7-carbaguanosine(34) in tRNA + S-adenosyl-L-methionine = epoxyqueuosine(34) in tRNA + adenine + L-methionine + 2 H(+). It functions in the pathway tRNA modification; tRNA-queuosine biosynthesis. Functionally, transfers and isomerizes the ribose moiety from AdoMet to the 7-aminomethyl group of 7-deazaguanine (preQ1-tRNA) to give epoxyqueuosine (oQ-tRNA). The polypeptide is S-adenosylmethionine:tRNA ribosyltransferase-isomerase (Pseudomonas syringae pv. syringae (strain B728a)).